A 537-amino-acid chain; its full sequence is Cytochrome c oxidase subunit 1 (537 aa).

Residues 22–42 (ILYLLFGLVSGIIGSVFSFII) traverse the membrane as a helical segment. The Ca(2+) site is built by glutamate 45, alanine 48, and glycine 50. Residue histidine 68 participates in Fe(II)-heme a binding. The next 8 membrane-spanning stretches (helical) occupy residues 70 to 90 (ILMI…NYLV), 104 to 124 (VNNF…ISAL), 152 to 172 (LAIL…VNLI), 190 to 210 (LFAW…PVLA), 241 to 261 (LFWF…FGVV), 279 to 299 (MLWA…HHLF), 318 to 338 (IAIP…GGAI), and 345 to 365 (MLYA…GVIL). Position 247 (histidine 247) interacts with Cu cation. The 1'-histidyl-3'-tyrosine (His-Tyr) cross-link spans 247-251 (HPEVY). Residue tyrosine 251 coordinates O2. 2 residues coordinate Cu cation: histidine 296 and histidine 297. Residues histidine 375 and aspartate 376 each contribute to the Mg(2+) site. 2 helical membrane-spanning segments follow: residues 379-399 (FVVA…LCGA) and 418-438 (IQFW…HFLG). Histidine 383 contributes to the heme a3 binding site. Histidine 385 contributes to the Fe(II)-heme a binding site. Proline 447 is a binding site for Ca(2+). Residues 458 to 478 (FVSSIGSVISILSLFLFMYVM) form a helical membrane-spanning segment.

Belongs to the heme-copper respiratory oxidase family. Component of the cytochrome c oxidase (complex IV, CIV), a multisubunit enzyme composed of a catalytic core of 3 subunits and several supernumerary subunits. The complex exists as a monomer or a dimer and forms supercomplexes (SCs) in the inner mitochondrial membrane with ubiquinol-cytochrome c oxidoreductase (cytochrome b-c1 complex, complex III, CIII). Heme is required as a cofactor. The cofactor is Cu cation.

It is found in the mitochondrion inner membrane. It catalyses the reaction 4 Fe(II)-[cytochrome c] + O2 + 8 H(+)(in) = 4 Fe(III)-[cytochrome c] + 2 H2O + 4 H(+)(out). The protein operates within energy metabolism; oxidative phosphorylation. In terms of biological role, component of the cytochrome c oxidase, the last enzyme in the mitochondrial electron transport chain which drives oxidative phosphorylation. The respiratory chain contains 3 multisubunit complexes succinate dehydrogenase (complex II, CII), ubiquinol-cytochrome c oxidoreductase (cytochrome b-c1 complex, complex III, CIII) and cytochrome c oxidase (complex IV, CIV), that cooperate to transfer electrons derived from NADH and succinate to molecular oxygen, creating an electrochemical gradient over the inner membrane that drives transmembrane transport and the ATP synthase. Cytochrome c oxidase is the component of the respiratory chain that catalyzes the reduction of oxygen to water. Electrons originating from reduced cytochrome c in the intermembrane space (IMS) are transferred via the dinuclear copper A center (CU(A)) of subunit 2 and heme A of subunit 1 to the active site in subunit 1, a binuclear center (BNC) formed by heme A3 and copper B (CU(B)). The BNC reduces molecular oxygen to 2 water molecules using 4 electrons from cytochrome c in the IMS and 4 protons from the mitochondrial matrix. In Schizosaccharomyces pombe (strain 972 / ATCC 24843) (Fission yeast), this protein is Cytochrome c oxidase subunit 1 (cox1).